The chain runs to 181 residues: Glucose-1-phosphate adenylyltransferase large subunit 2 (181 aa).

It belongs to the bacterial/plant glucose-1-phosphate adenylyltransferase family. In terms of assembly, heterotetramer. As to expression, leaves.

It localises to the plastid. The protein resides in the chloroplast. The protein localises to the amyloplast. The enzyme catalyses alpha-D-glucose 1-phosphate + ATP + H(+) = ADP-alpha-D-glucose + diphosphate. Its pathway is glycan biosynthesis; starch biosynthesis. Its activity is regulated as follows. Highly active without 3'phosphoglycerate, and is only slightly affected by the activator 3'phosphoglycerate and inhibitor orthophosphate. Its function is as follows. This protein plays a role in synthesis of starch. It catalyzes the synthesis of the activated glycosyl donor, ADP-glucose from Glc-1-P and ATP. This Hordeum vulgare (Barley) protein is Glucose-1-phosphate adenylyltransferase large subunit 2.